The sequence spans 396 residues: Elongation factor Tu 1 (396 aa).

In terms of domain architecture, tr-type G spans 10-206 (KLHVNVGTIG…ALDTFIPDPT (197 aa)). The interval 19–26 (GHVDHGKT) is G1. 19-26 (GHVDHGKT) is a binding site for GTP. A Mg(2+)-binding site is contributed by Thr-26. The G2 stretch occupies residues 60–64 (GITIS). Residues 81-84 (DCPG) form a G3 region. GTP contacts are provided by residues 81-85 (DCPGH) and 136-139 (NKAD). Positions 136–139 (NKAD) are G4. The interval 174 to 176 (SAR) is G5.

This sequence belongs to the TRAFAC class translation factor GTPase superfamily. Classic translation factor GTPase family. EF-Tu/EF-1A subfamily. Monomer.

The protein resides in the cytoplasm. The enzyme catalyses GTP + H2O = GDP + phosphate + H(+). Its function is as follows. GTP hydrolase that promotes the GTP-dependent binding of aminoacyl-tRNA to the A-site of ribosomes during protein biosynthesis. In Xanthomonas campestris pv. campestris (strain B100), this protein is Elongation factor Tu 1.